The primary structure comprises 470 residues: 3-isopropylmalate dehydratase large subunit (470 aa).

Positions 351, 411, and 414 each coordinate [4Fe-4S] cluster.

Belongs to the aconitase/IPM isomerase family. LeuC type 1 subfamily. Heterodimer of LeuC and LeuD. [4Fe-4S] cluster serves as cofactor.

The enzyme catalyses (2R,3S)-3-isopropylmalate = (2S)-2-isopropylmalate. Its pathway is amino-acid biosynthesis; L-leucine biosynthesis; L-leucine from 3-methyl-2-oxobutanoate: step 2/4. In terms of biological role, catalyzes the isomerization between 2-isopropylmalate and 3-isopropylmalate, via the formation of 2-isopropylmaleate. This chain is 3-isopropylmalate dehydratase large subunit, found in Rhodopseudomonas palustris (strain BisA53).